The following is a 444-amino-acid chain: MREIVHVQGGQCGNQIGAKFWEVISDEHGVEPTGAYHGDSDLQLERINVYYNEATGGRYVPRAVLMDLEPGTMDSVRAGPFGQLFRPDNFVFGQTGAGNNWAKGHYTEGAELIDSVLDVVRKEAEGCDCLQGFQITHSLGGGTGSGMGTLLISKIREEYPDRIMETFSVFPSPKVSDTVVEPYNATLSVHQLVENADEVMVIDNEALYDICFRTLKLTTPTYGDLNHLVSACISGVTACLRFPGQLNSDLRKLAVNLIPFPRLHFFMIGFAPLTSRGSQQYRALTVPELTQQMFDAKNMMSASDPRHGRYLTASAMFRGRMSTKEVDEQMLNVQNKNSSYFVEWIPNNIKSSVCDIPPKGLKMSSTFVGNSTAIQEMFKRVAEQFTAMFRRKAFLHWYTGEGMDEMEFTEAESNMNDLVSEYQQYQDATAEEEGEMDEEEGAME.

Residues Gln11, Glu69, Ser138, Gly142, Thr143, Gly144, Asn204, and Asn226 each contribute to the GTP site. Glu69 contacts Mg(2+).

This sequence belongs to the tubulin family. In terms of assembly, dimer of alpha and beta chains. A typical microtubule is a hollow water-filled tube with an outer diameter of 25 nm and an inner diameter of 15 nM. Alpha-beta heterodimers associate head-to-tail to form protofilaments running lengthwise along the microtubule wall with the beta-tubulin subunit facing the microtubule plus end conferring a structural polarity. Microtubules usually have 13 protofilaments but different protofilament numbers can be found in some organisms and specialized cells. Requires Mg(2+) as cofactor.

The protein localises to the cytoplasm. The protein resides in the cytoskeleton. Functionally, tubulin is the major constituent of microtubules, a cylinder consisting of laterally associated linear protofilaments composed of alpha- and beta-tubulin heterodimers. Microtubules grow by the addition of GTP-tubulin dimers to the microtubule end, where a stabilizing cap forms. Below the cap, tubulin dimers are in GDP-bound state, owing to GTPase activity of alpha-tubulin. The chain is Tubulin beta chain from Euplotoides octocarinatus (Freshwater ciliate).